A 322-amino-acid polypeptide reads, in one-letter code: Sideroflexin-1 (322 aa).

At Ser-2 the chain carries N-acetylserine. Residues 2 to 102 (SGEVPPNINI…MSAQVPMNMT (101 aa)) lie on the Mitochondrial matrix side of the membrane. Residues 103–120 (ITGCMMTFYRTTPAVLFW) form a helical membrane-spanning segment. Topologically, residues 121–146 (QWINQSFNAVVNYTNRSGDAPLTVNE) are mitochondrial intermembrane. A helical membrane pass occupies residues 147 to 167 (LGTAYVSATTGAVATALGLNA). Residues 168–174 (LTKRVSP) lie on the Mitochondrial matrix side of the membrane. A helical transmembrane segment spans residues 175–195 (LIGRFVPFAAVAAANCINIPL). Topologically, residues 196 to 228 (MRQRELKVGIPVTDENGTRLGESTNAAKQAITQ) are mitochondrial intermembrane. A helical membrane pass occupies residues 229-249 (VVISRILMAAPGMAIPPFIMN). The Mitochondrial matrix segment spans residues 250 to 266 (TLEKKAFLKRFPWMSAP). The helical transmembrane segment at 267–287 (IQVTLVGFCLVFATPLCCALF) threads the bilayer. Over 288–322 (PQKSSMSVTSLEDELQASIQRTHPEIRRVYFNKGL) the chain is Mitochondrial intermembrane.

Belongs to the sideroflexin family. As to expression, widely expressed, with highest expression in kidney and liver.

The protein resides in the mitochondrion inner membrane. The enzyme catalyses L-serine(in) = L-serine(out). It catalyses the reaction L-alanine(in) = L-alanine(out). The catalysed reaction is L-cysteine(in) = L-cysteine(out). Amino acid transporter importing serine, an essential substrate of the mitochondrial branch of the one-carbon pathway, into mitochondria. Mitochondrial serine is then converted to glycine and formate, which exits to the cytosol where it is used to generate the charged folates that serve as one-carbon donors. May also transport other amino acids including alanine and cysteine. In Mus musculus (Mouse), this protein is Sideroflexin-1.